Here is a 401-residue protein sequence, read N- to C-terminus: Imidazolonepropionase (401 aa).

Positions 66 and 68 each coordinate Fe(3+). Positions 66 and 68 each coordinate Zn(2+). The 4-imidazolone-5-propanoate site is built by Arg75, Tyr138, and His171. Tyr138 is a binding site for N-formimidoyl-L-glutamate. His236 is a binding site for Fe(3+). His236 is a binding site for Zn(2+). Residue Gln239 coordinates 4-imidazolone-5-propanoate. Residue Asp311 coordinates Fe(3+). Residue Asp311 coordinates Zn(2+). Positions 313 and 315 each coordinate N-formimidoyl-L-glutamate. Position 316 (Thr316) interacts with 4-imidazolone-5-propanoate.

Belongs to the metallo-dependent hydrolases superfamily. HutI family. The cofactor is Zn(2+). Fe(3+) serves as cofactor.

It localises to the cytoplasm. It catalyses the reaction 4-imidazolone-5-propanoate + H2O = N-formimidoyl-L-glutamate. Its pathway is amino-acid degradation; L-histidine degradation into L-glutamate; N-formimidoyl-L-glutamate from L-histidine: step 3/3. Its function is as follows. Catalyzes the hydrolytic cleavage of the carbon-nitrogen bond in imidazolone-5-propanoate to yield N-formimidoyl-L-glutamate. It is the third step in the universal histidine degradation pathway. The protein is Imidazolonepropionase of Pseudomonas entomophila (strain L48).